The primary structure comprises 629 residues: tRNA uridine 5-carboxymethylaminomethyl modification enzyme MnmG (629 aa).

13 to 18 serves as a coordination point for FAD; that stretch reads GGGHAG. 273–287 contacts NAD(+); sequence GPRYCPSIEDKVVRF.

It belongs to the MnmG family. In terms of assembly, homodimer. Heterotetramer of two MnmE and two MnmG subunits. Requires FAD as cofactor.

It localises to the cytoplasm. Its function is as follows. NAD-binding protein involved in the addition of a carboxymethylaminomethyl (cmnm) group at the wobble position (U34) of certain tRNAs, forming tRNA-cmnm(5)s(2)U34. The sequence is that of tRNA uridine 5-carboxymethylaminomethyl modification enzyme MnmG from Nitrosococcus oceani (strain ATCC 19707 / BCRC 17464 / JCM 30415 / NCIMB 11848 / C-107).